A 148-amino-acid polypeptide reads, in one-letter code: uncharacterized protein (148 aa).

This is an uncharacterized protein from Bacillus subtilis (strain 168).